The following is a 658-amino-acid chain: DNA ligase (658 aa).

Residues 31 to 35 (DFEYD), 80 to 81 (SL), and Glu110 each bind NAD(+). Lys112 acts as the N6-AMP-lysine intermediate in catalysis. Residues Arg133, Glu167, Lys279, and Lys303 each coordinate NAD(+). Cys397, Cys400, Cys415, and Cys420 together coordinate Zn(2+). Residues 584 to 654 (DTASIYFQKS…KALNIPIINE (71 aa)) form the BRCT domain.

This sequence belongs to the NAD-dependent DNA ligase family. LigA subfamily. Mg(2+) is required as a cofactor. Mn(2+) serves as cofactor.

The enzyme catalyses NAD(+) + (deoxyribonucleotide)n-3'-hydroxyl + 5'-phospho-(deoxyribonucleotide)m = (deoxyribonucleotide)n+m + AMP + beta-nicotinamide D-nucleotide.. In terms of biological role, DNA ligase that catalyzes the formation of phosphodiester linkages between 5'-phosphoryl and 3'-hydroxyl groups in double-stranded DNA using NAD as a coenzyme and as the energy source for the reaction. It is essential for DNA replication and repair of damaged DNA. This chain is DNA ligase, found in Mycoplasma pneumoniae (strain ATCC 29342 / M129 / Subtype 1) (Mycoplasmoides pneumoniae).